Here is a 469-residue protein sequence, read N- to C-terminus: UDP-glycosyltransferase 75B1 (469 aa).

His-16 functions as the Proton acceptor in the catalytic mechanism. His-16 contributes to the an anthocyanidin binding site. UDP-alpha-D-glucose contacts are provided by Gln-334, His-349, Trp-352, Ser-354, Glu-357, Asp-373, and Gln-374.

It belongs to the UDP-glycosyltransferase family. In terms of assembly, interacts with CALS1, ROP1 and phragmoplastin.

Its subcellular location is the cytoplasm. The protein resides in the perinuclear region. It localises to the cytoskeleton. The protein localises to the phragmoplast. The catalysed reaction is (indol-3-yl)acetate + UDP-alpha-D-glucose = 1-O-(indol-3-ylacetyl)-beta-D-glucose + UDP. It participates in plant hormone metabolism; auxin conjugation. Its function is as follows. Possesses low catalytic activity on indole-3-acetic acid (IAA) in vitro. May transfer UDP-glucose from sucrose synthase to callose synthase for the synthesis of callose at the forming cell plate during cytokinesis. Has high affinity for 4-aminobenzoate. Catalyzes the formation of 4-aminobenzoate glucose ester which represents a storage form of 4-aminobenzoate in the vacuole. Is the major source of this activity in the plant. Also active in vitro on benzoates and benzoate derivatives. In Arabidopsis thaliana (Mouse-ear cress), this protein is UDP-glycosyltransferase 75B1 (UGT75B1).